A 90-amino-acid polypeptide reads, in one-letter code: Kunitz-type serine protease inhibitor 1 (90 aa).

The first 24 residues, 1 to 24, serve as a signal peptide directing secretion; the sequence is MSSGGLLLLLGLLTLWAELTPVSG. A Pyrrolidone carboxylic acid modification is found at Q25. In terms of domain architecture, BPTI/Kunitz inhibitor spans 31-81; that stretch reads CYLPADPGRCKAHIPRFYYDSASNKCNKFIYGGCPGNANNFKTWDECRQTC. Intrachain disulfides connect C31-C81, C40-C64, and C56-C77. A propeptide spanning residues 86-90 is cleaved from the precursor; the sequence is MGRPT.

Belongs to the venom Kunitz-type family. As to expression, expressed by the venom gland.

It is found in the secreted. Serine protease inhibitor that principally inhibits trypsin (Ki=0.34 nM). Also inhibits alpha-chymotrypsin (Ki=270 nM), plasmin, plasma and pancreatic kallikrein. The sequence is that of Kunitz-type serine protease inhibitor 1 from Vipera ammodytes ammodytes (Western sand viper).